Here is a 470-residue protein sequence, read N- to C-terminus: E3 SUMO-protein ligase EGR2 (470 aa).

Over residues 126-141 (PPASTTASSSVTSASP) the composition is skewed to low complexity. 3 disordered regions span residues 126 to 153 (PPAS…GVCT), 159 to 178 (PELD…SGCT), and 185 to 210 (PSAF…SYPS). Residues 190-202 (SPPSTTSTSSLAY) are compositionally biased toward low complexity. Position 247 is an N6-acetyllysine; by EP300 (Lys247). Residues 275-291 (GPGAGVTGPGASGGGEG) are compositionally biased toward gly residues. The tract at residues 275 to 345 (GPGAGVTGPG…PYPCPAEGCD (71 aa)) is disordered. 3 C2H2-type zinc fingers span residues 337–361 (YPCP…IRIH), 367–389 (FQCR…IRTH), and 395–417 (FACD…TKIH). Residues 408 to 470 (DERKRHTKIH…ASCTSRTRTP (63 aa)) are disordered. Positions 412 to 422 (RHTKIHLRQKE) are enriched in basic residues. Residues 426–439 (SAPSAPPSAQSSAS) show a composition bias toward low complexity. Positions 440 to 450 (GPGGSQAGGSL) are enriched in gly residues.

The protein belongs to the EGR C2H2-type zinc-finger protein family. Interacts with HCFC1. Interacts with WWP2. Interacts with UBC9. Interacts with CITED1. Interacts (via phosphorylated form) with SFN. Ubiquitinated by WWP2 leading to proteasomal degradation. Post-translationally, acetylated at Lys-247. May be deacetylated by HDAC6, HDAC10 or SIRT1. As to expression, expressed mainly in the thymus.

It is found in the nucleus. It participates in protein modification; protein sumoylation. Sequence-specific DNA-binding transcription factor. Plays a role in hindbrain segmentation by regulating the expression of a subset of homeobox containing genes and in Schwann cell myelination by regulating the expression of genes involved in the formation and maintenance of myelin. Binds to two EGR2-consensus sites EGR2A (5'-CTGTAGGAG-3') and EGR2B (5'-ATGTAGGTG-3') in the HOXB3 enhancer and promotes HOXB3 transcriptional activation. Binds to specific DNA sites located in the promoter region of HOXA4, HOXB2 and ERBB2. Regulates hindbrain segmentation by controlling the expression of Hox genes, such as HOXA4, HOXB3 and HOXB2, and thereby specifying odd and even rhombomeres. Promotes the expression of HOXB3 in the rhombomere r5 and of HOXB3 in r3 and r5 in the hindbrain. Regulates myelination in the peripheral nervous system after birth, possibly by regulating the expression of myelin proteins, such as MPZ, and by promoting the differentiation of Schwann cells. Involved in the development of the jaw openener musculature, probably by playing a role in its innervation through trigeminal motor neurons. May play a role in adipogenesis, possibly by regulating the expression of CEBPB. Functionally, E3 SUMO-protein ligase helping SUMO1 conjugation to its coregulators NAB1 and NAB2, whose sumoylation down-regulates EGR2 transcriptional activity. The protein is E3 SUMO-protein ligase EGR2 (Egr2) of Mus musculus (Mouse).